The chain runs to 232 residues: Orotidine 5'-phosphate decarboxylase (232 aa).

Residues Asp-13, Lys-35, 62–71 (DLKFHDIPNT), Thr-122, Arg-182, Gln-191, Gly-211, and Arg-212 contribute to the substrate site. Lys-64 serves as the catalytic Proton donor.

It belongs to the OMP decarboxylase family. Type 1 subfamily. In terms of assembly, homodimer.

The catalysed reaction is orotidine 5'-phosphate + H(+) = UMP + CO2. Its pathway is pyrimidine metabolism; UMP biosynthesis via de novo pathway; UMP from orotate: step 2/2. Its function is as follows. Catalyzes the decarboxylation of orotidine 5'-monophosphate (OMP) to uridine 5'-monophosphate (UMP). This chain is Orotidine 5'-phosphate decarboxylase, found in Pseudomonas savastanoi pv. phaseolicola (strain 1448A / Race 6) (Pseudomonas syringae pv. phaseolicola (strain 1448A / Race 6)).